A 112-amino-acid polypeptide reads, in one-letter code: Urease subunit gamma (112 aa).

The protein belongs to the urease gamma subunit family. Heterotrimer of UreA (gamma), UreB (beta) and UreC (alpha) subunits. Three heterotrimers associate to form the active enzyme.

The protein localises to the cytoplasm. The catalysed reaction is urea + 2 H2O + H(+) = hydrogencarbonate + 2 NH4(+). It participates in nitrogen metabolism; urea degradation; CO(2) and NH(3) from urea (urease route): step 1/1. The protein is Urease subunit gamma of Gloeothece citriformis (strain PCC 7424) (Cyanothece sp. (strain PCC 7424)).